The following is a 408-amino-acid chain: 1-deoxy-D-xylulose 5-phosphate reductoisomerase (408 aa).

NADPH contacts are provided by Thr27, Gly28, Ser29, Ile30, Ala53, Arg54, Asn55, and Asn140. Residue Lys141 participates in 1-deoxy-D-xylulose 5-phosphate binding. Glu142 is a binding site for NADPH. Asp166 lines the Mn(2+) pocket. Ser167, Glu168, Ser192, and His215 together coordinate 1-deoxy-D-xylulose 5-phosphate. Position 168 (Glu168) interacts with Mn(2+). Gly221 is an NADPH binding site. 4 residues coordinate 1-deoxy-D-xylulose 5-phosphate: Ser228, Asn233, Lys234, and Glu237. Glu237 provides a ligand contact to Mn(2+).

The protein belongs to the DXR family. Mg(2+) is required as a cofactor. Requires Mn(2+) as cofactor.

The enzyme catalyses 2-C-methyl-D-erythritol 4-phosphate + NADP(+) = 1-deoxy-D-xylulose 5-phosphate + NADPH + H(+). The protein operates within isoprenoid biosynthesis; isopentenyl diphosphate biosynthesis via DXP pathway; isopentenyl diphosphate from 1-deoxy-D-xylulose 5-phosphate: step 1/6. Catalyzes the NADPH-dependent rearrangement and reduction of 1-deoxy-D-xylulose-5-phosphate (DXP) to 2-C-methyl-D-erythritol 4-phosphate (MEP). In Nitratidesulfovibrio vulgaris (strain DP4) (Desulfovibrio vulgaris), this protein is 1-deoxy-D-xylulose 5-phosphate reductoisomerase.